Here is a 50-residue protein sequence, read N- to C-terminus: U3-ctenitoxin-Asp1a (50 aa).

As to expression, expressed by the venom gland.

The protein localises to the secreted. Functionally, possible neurotoxin. The protein is U3-ctenitoxin-Asp1a of Ancylometes sp. (South American fishing spider).